A 668-amino-acid chain; its full sequence is Major S-layer protein (668 aa).

Positions 1 to 24 (MKRFAAVTLAALMLLTVFASAASA) are cleaved as a signal peptide. N-linked (GlcNAc...) asparagine glycosylation is found at Asn-36, Asn-65, Asn-111, Asn-265, Asn-583, Asn-596, Asn-602, Asn-608, Asn-617, and Asn-635. The interval 584–650 (ETTSITKPDE…ESNGSPGFGV (67 aa)) is disordered. Residues 596-611 (NETVSDNETMPDNTSS) show a composition bias toward polar residues. The segment covering 631–641 (EPTDNETEPDE) has biased composition (acidic residues). Residues 644–664 (GSPGFGVVLGLAGLLGVVYLV) form a helical membrane-spanning segment.

Belongs to the Methanosarcinales S-layer protein family. In terms of processing, glycosylated.

It is found in the secreted. Its subcellular location is the cell wall. The protein resides in the S-layer. It localises to the cell membrane. S-layer protein. The S-layer is a paracrystalline mono-layered assembly of proteins which coat the surface of the cell. This Methanosarcina barkeri (strain Fusaro / DSM 804) protein is Major S-layer protein.